A 1938-amino-acid polypeptide reads, in one-letter code: Myosin-1 (1938 aa).

A Myosin N-terminal SH3-like domain is found at 33 to 82 (DAKTSVFVADPKESFVKATVQSREGGKVTAKTEAGATVTVKEDQCFPMNP). Phosphothreonine occurs at positions 64 and 69. Residues 86–781 (DKIEDMAMMT…LLGLLEEMRD (696 aa)) enclose the Myosin motor domain. Lys130 carries the post-translational modification N6,N6,N6-trimethyllysine. Residue 179-186 (GESGAGKT) participates in ATP binding. Tyr389 carries the post-translational modification Phosphotyrosine. Thr419 is subject to Phosphothreonine. Tyr424 carries the phosphotyrosine modification. A Phosphoserine modification is found at Ser625. An actin-binding region spans residues 658 to 680 (LNKLMTNLRSTHPHFVRCIIPNE). The residue at position 756 (His756) is a Pros-methylhistidine. The tract at residues 760–774 (KFGHTKVFFKAGLLG) is actin-binding. The IQ domain occupies 784 to 813 (LAQIITRTQARCRGFLARVEYQRMVERRES). A coiled-coil region spans residues 842–1938 (LLKSAETEKE…EVHTKIISEE (1097 aa)). 2 positions are modified to phosphoserine: Ser1091 and Ser1095. 2 disordered regions span residues 1124-1146 (EIEA…SREL) and 1152-1171 (RLEE…KKRE). The span at 1127 to 1146 (AERASRAKAEKQRSDLSREL) shows a compositional bias: basic and acidic residues. Phosphoserine is present on residues Ser1161 and Ser1236. At Thr1240 the chain carries Phosphothreonine. Ser1242 carries the phosphoserine modification. A Phosphothreonine modification is found at Thr1254. Residue Ser1260 is modified to Phosphoserine. Position 1285 is a phosphothreonine (Thr1285). Residues Ser1291, Ser1302, and Ser1305 each carry the phosphoserine modification. Phosphotyrosine is present on Tyr1463. Phosphothreonine is present on Thr1466. Position 1473 is a phosphoserine (Ser1473). The residue at position 1491 (Tyr1491) is a Phosphotyrosine. Ser1494 carries the post-translational modification Phosphoserine. A Phosphothreonine modification is found at Thr1500. Ser1513 carries the post-translational modification Phosphoserine. Thr1516 carries the phosphothreonine modification. A phosphoserine mark is found at Ser1541, Ser1553, Ser1573, Ser1713, and Ser1725. Phosphothreonine occurs at positions 1729 and 1735. Ser1738 carries the post-translational modification Phosphoserine.

Belongs to the TRAFAC class myosin-kinesin ATPase superfamily. Myosin family. In terms of assembly, muscle myosin is a hexameric protein that consists of 2 heavy chain subunits (MHC), 2 alkali light chain subunits (MLC) and 2 regulatory light chain subunits (MLC-2). Interacts with SLC26A5.

It localises to the cytoplasm. It is found in the myofibril. Required for normal hearing. It plays a role in cochlear amplification of auditory stimuli, likely through the positive regulation of prestin (SLC26A5) activity and outer hair cell (OHC) electromotility. This chain is Myosin-1 (MYH1), found in Equus caballus (Horse).